The following is a 259-amino-acid chain: Small ribosomal subunit protein mS23 (259 aa).

The protein belongs to the mitochondrion-specific ribosomal protein mS23 family. Component of the mitochondrial small ribosomal subunit.

The protein localises to the mitochondrion. The sequence is that of Small ribosomal subunit protein mS23 (RSM25) from Pyricularia oryzae (strain 70-15 / ATCC MYA-4617 / FGSC 8958) (Rice blast fungus).